We begin with the raw amino-acid sequence, 170 residues long: MDLKSLIRDVPDFPKPGILFRDLTTLLQNQAGLRYVIDQLVEKHANAGIDYVAGIESRGFIFGAPLAYRLGAGFIPLRKPGKLCAPVYAVEYELEYGRDRLEMHQDAIEPGRRVLIVDDLIATGGTAAAAAGLIQKAQAELYGFAFIVELTDLAGRQKLPDVPITTLVTY.

The protein belongs to the purine/pyrimidine phosphoribosyltransferase family. In terms of assembly, homodimer.

It localises to the cytoplasm. The enzyme catalyses AMP + diphosphate = 5-phospho-alpha-D-ribose 1-diphosphate + adenine. It participates in purine metabolism; AMP biosynthesis via salvage pathway; AMP from adenine: step 1/1. Catalyzes a salvage reaction resulting in the formation of AMP, that is energically less costly than de novo synthesis. This Thermosynechococcus vestitus (strain NIES-2133 / IAM M-273 / BP-1) protein is Adenine phosphoribosyltransferase.